Here is a 487-residue protein sequence, read N- to C-terminus: MKYKDLRDFIKILEHRGDLKRIKFPINPDLEITEIADRTIKSGGPALFFENPTGYTIPVLCNLFGTPNRIALGMGKESILSLRDVGKLLAFLREPELPTGVHDFFSKIPHFRHILHMPIKRVSTAPCQENVWCNQDVDITHMPIMRCWPQDVSPVITWGITITRGLKSKRQNLGIYRQQVLSKNKIIMRWLSHRGGALDFQEWHKNTSERRFPITVALGADPATLIGAVVPIPDTLSEYAFSGLLRGCRTEVIKCISCDLDVPANSEIVLEGYLERDETAIEGPFGDHTGYYNTTAKFPVCTITHITQRNNPIYLSTYTGRPPDEPAILGMAMNEMFIPIIQKQFPEITDFYLPPEGCSYRLAIVTIKKQYIGHAKRIIFGIWSFLKQFMYTKFIIVCDDDINARDWNDVVWAITTRMEPDRDTIIVKNTPIDYLDFSSPISGLGSKIGMDATNKWPGETEREWGIPIKMHDTVRHYIDSIWDKLDI.

Asparagine 172 is a binding site for Mn(2+). Prenylated FMN contacts are provided by residues 175 to 177 (IYR), 189 to 191 (RWL), and 194 to 195 (RG). Glutamate 238 is a binding site for Mn(2+). Aspartate 287 serves as the catalytic Proton donor.

This sequence belongs to the UbiD family. Homohexamer. Requires prenylated FMN as cofactor. It depends on Mn(2+) as a cofactor.

It localises to the cell membrane. The enzyme catalyses a 4-hydroxy-3-(all-trans-polyprenyl)benzoate + H(+) = a 2-(all-trans-polyprenyl)phenol + CO2. The protein operates within cofactor biosynthesis; ubiquinone biosynthesis. Its function is as follows. Catalyzes the decarboxylation of 3-octaprenyl-4-hydroxy benzoate to 2-octaprenylphenol, an intermediate step in ubiquinone biosynthesis. The chain is 3-octaprenyl-4-hydroxybenzoate carboxy-lyase from Blochmanniella pennsylvanica (strain BPEN).